The following is a 395-amino-acid chain: G-protein coupled receptor 182 (395 aa).

Over 1 to 53 (MSVIPSPRPVSTLEPDNDFRDIHNWTELLHLFNQTFTDCHIEFNENTKHVVLF) the chain is Extracellular. N-linked (GlcNAc...) asparagine glycosylation is found at asparagine 24 and asparagine 33. A helical membrane pass occupies residues 54-75 (VFYLAIFVVGLVENVLVICVNC). At 76–86 (RRSGRVGMLNL) the chain is on the cytoplasmic side. A helical membrane pass occupies residues 87-109 (YILNMAIADLGIILSLPVWMLEV). The Extracellular portion of the chain corresponds to 110-123 (MLEYTWLWGSFSCR). A disulfide bridge connects residues cysteine 122 and cysteine 198. The chain crosses the membrane as a helical span at residues 124–145 (FIHYFYLVNMYSSIFFLTCLSI). Residues 146–166 (DRYVTLTNTSPSWQRHQHRIR) lie on the Cytoplasmic side of the membrane. Residues 167-189 (RAVCAGVWVLSAIIPLPEVVHIQ) form a helical membrane-spanning segment. Residues 190–213 (LLDGSEPMCLFLAPFETYSAWALA) lie on the Extracellular side of the membrane. A helical transmembrane segment spans residues 214–235 (VALSATILGFLLPFLLIAVFNI). Residues 236–254 (LTACRLRRQRQTESRRHCL) are Cytoplasmic-facing. Residues 255–276 (LMWAYIVVFAICWLPYQVTMLL) form a helical membrane-spanning segment. The Extracellular segment spans residues 277–295 (LTLHGTHIFLHCHLVNLLY). Residues 296-316 (FFYEIIDCFSMLHCVANPILY) traverse the membrane as a helical segment. At 317–395 (NFLSPSFRGR…QTPHLHSAIL (79 aa)) the chain is on the cytoplasmic side. At serine 329 the chain carries Phosphoserine.

Belongs to the G-protein coupled receptor 1 family. Expressed in liver and lung.

The protein localises to the cell membrane. Functionally, orphan receptor. The polypeptide is G-protein coupled receptor 182 (Gpr182) (Mus musculus (Mouse)).